We begin with the raw amino-acid sequence, 613 residues long: V-type proton ATPase catalytic subunit A isoform 2 (613 aa).

240–247 (GAFGCGKT) contributes to the ATP binding site.

This sequence belongs to the ATPase alpha/beta chains family. V-ATPase is a heteromultimeric enzyme composed of a peripheral catalytic V1 complex (main components: subunits A, B, C, D, E, and F) attached to an integral membrane V0 proton pore complex (main component: the proteolipid protein).

It catalyses the reaction ATP + H2O + 4 H(+)(in) = ADP + phosphate + 5 H(+)(out). Its function is as follows. Catalytic subunit of the peripheral V1 complex of vacuolar ATPase. V-ATPase vacuolar ATPase is responsible for acidifying a variety of intracellular compartments in eukaryotic cells. This Acetabularia acetabulum (Mermaid's wine glass) protein is V-type proton ATPase catalytic subunit A isoform 2.